The following is a 359-amino-acid chain: MAGPPGDDIFRATLAAVAPGTPFRDGLERILRGHTGALIVLGHDKVVEGLCTGGFELDVEFSATRLRELAKMDGAIVLSSDLQRIVRAAVHLVPDPTVPTEESGTRHRTAERVAKQTEYPVISVSQSMHIIALYVAGRRYVLDGSAAILSRANQALATLERYKLRLDEVAGTLSALEIEDLVTVRDAISVSQRLEMVRRIADEIEGYVVELGTDGRLLSLQLEELMAGVETERELTVRDYLPAGSKAGSAAQVLSELSAMSPTDLLDLTVLARVIGFSGGADILDRQISPRGYRMLAKVPRLPRMVVDRLVDHFGTLQKLLAAGVDDLQAVDGVGETRARAVREGLSRLAESSILERYV.

In terms of domain architecture, DAC spans 7-146; it reads DDIFRATLAA…GRRYVLDGSA (140 aa). ATP contacts are provided by residues Gly74, Leu92, and 105 to 109; that span reads TRHRT.

It belongs to the DisA family. As to quaternary structure, homooctamer. It depends on Mg(2+) as a cofactor.

The enzyme catalyses 2 ATP = 3',3'-c-di-AMP + 2 diphosphate. Functionally, participates in a DNA-damage check-point that is active prior to asymmetric division when DNA is damaged. DisA forms globular foci that rapidly scan along the chromosomes during sporulation, searching for lesions. When a lesion is present, DisA pauses at the lesion site. This triggers a cellular response that culminates in a temporary block in sporulation initiation. In terms of biological role, also has diadenylate cyclase activity, catalyzing the condensation of 2 ATP molecules into cyclic di-AMP (c-di-AMP). c-di-AMP acts as a signaling molecule that couples DNA integrity with progression of sporulation. The rise in c-di-AMP level generated by DisA while scanning the chromosome, operates as a positive signal that advances sporulation; upon encountering a lesion, the DisA focus arrests at the damaged site and halts c-di-AMP synthesis. This chain is DNA integrity scanning protein DisA, found in Frankia alni (strain DSM 45986 / CECT 9034 / ACN14a).